Here is a 334-residue protein sequence, read N- to C-terminus: N-acetylmuramoyl-L-alanine amidase sle1 (334 aa).

Residues methionine 1 to alanine 25 form the signal peptide. One can recognise a LysM 1 domain in the interval threonine 27–valine 70. Low complexity predominate over residues serine 71–asparagine 86. The tract at residues serine 71 to glycine 90 is disordered. One can recognise a LysM 2 domain in the interval serine 91–valine 134. The disordered stretch occupies residues threonine 137–glycine 156. The LysM 3 domain occupies serine 158–valine 201. Residues glycine 210–histidine 334 enclose the Peptidase C51 domain.

It localises to the secreted. The protein resides in the cell surface. It catalyses the reaction Hydrolyzes the link between N-acetylmuramoyl residues and L-amino acid residues in certain cell-wall glycopeptides.. Functionally, peptidoglycan hydrolase involved in the splitting of the septum during cell division. In Staphylococcus aureus (strain MRSA252), this protein is N-acetylmuramoyl-L-alanine amidase sle1 (sle1).